We begin with the raw amino-acid sequence, 259 residues long: Ribosome maturation factor RimP (259 aa).

Residues 186 to 195 (RGKQAERELK) are compositionally biased toward basic and acidic residues. Positions 186 to 259 (RGKQAERELK…RGDTDLSEGD (74 aa)) are disordered. The segment covering 239-248 (KQHRLAAGRS) has biased composition (basic residues).

Belongs to the RimP family.

It localises to the cytoplasm. Functionally, required for maturation of 30S ribosomal subunits. The protein is Ribosome maturation factor RimP of Rhodopseudomonas palustris (strain HaA2).